The primary structure comprises 139 residues: ATP synthase epsilon chain (139 aa).

It belongs to the ATPase epsilon chain family. F-type ATPases have 2 components, CF(1) - the catalytic core - and CF(0) - the membrane proton channel. CF(1) has five subunits: alpha(3), beta(3), gamma(1), delta(1), epsilon(1). CF(0) has three main subunits: a, b and c.

The protein resides in the cell inner membrane. Produces ATP from ADP in the presence of a proton gradient across the membrane. The sequence is that of ATP synthase epsilon chain from Nitrosospira multiformis (strain ATCC 25196 / NCIMB 11849 / C 71).